A 752-amino-acid chain; its full sequence is Palmitoyltransferase AKR1 (752 aa).

Disordered regions lie at residues 1–21 (MTAE…KSDY) and 49–68 (ASSE…LGSV). Topologically, residues 1–318 (MTAEEVDKES…FPLPQYFSAS (318 aa)) are cytoplasmic. Composition is skewed to basic and acidic residues over residues 9-21 (ESDP…KSDY) and 51-68 (SELK…LGSV). 6 ANK repeats span residues 72-102 (PILE…DLSN), 108-137 (ERVS…EVNF), 142-171 (LDAT…DPNI), 175-208 (QGYN…DVDQ), 212-241 (HQRT…DVKN), and 245-274 (AGFT…DFFQ). Residues 319–339 (TGKMLTFFLPWVLIPLVFYIF) traverse the membrane as a helical segment. Residues 340–341 (SK) are Lumenal-facing. A helical membrane pass occupies residues 342-362 (ITFFIALLINTIVLVISGLVL). The Cytoplasmic portion of the chain corresponds to 363–380 (SRLVVPSYLLSKRHPILN). Residues 381–401 (SPLLAGILSGTIAIAFFIWFT) traverse the membrane as a helical segment. The Lumenal segment spans residues 402-412 (KISILTFTEKP). Residues 413-433 (VGNIIMLGFFIGLITLFIGLM) form a helical membrane-spanning segment. At 434 to 509 (KSDPGYIPGT…YNQIGLLNHK (76 aa)) the chain is on the cytoplasmic side. One can recognise a DHHC domain in the interval 466–516 (HFCVHTWIRIPLRSKYDRDSACLISAFDHFCPWVYNQIGLLNHKLFYMFVV). C496 functions as the S-palmitoyl cysteine intermediate in the catalytic mechanism. A helical transmembrane segment spans residues 510-530 (LFYMFVVLLEISVWWFLPLMM). Residues 531-567 (EYFDELEDYLENRKGKHFGDCHFLGDEDLCFGLHHDT) lie on the Lumenal side of the membrane. Residues 568-588 (FNFLLLCWVIFQAFWVLCLIA) form a helical membrane-spanning segment. The Cytoplasmic portion of the chain corresponds to 589–752 (VQTVQMLKGV…TLPNATEELV (164 aa)).

It belongs to the DHHC palmitoyltransferase family. AKR/ZDHHC17 subfamily.

It localises to the early endosome membrane. It is found in the golgi apparatus membrane. It carries out the reaction L-cysteinyl-[protein] + hexadecanoyl-CoA = S-hexadecanoyl-L-cysteinyl-[protein] + CoA. Functionally, palmitoyltransferase specific for casein kinase 1. The chain is Palmitoyltransferase AKR1 (AKR1) from Kluyveromyces lactis (strain ATCC 8585 / CBS 2359 / DSM 70799 / NBRC 1267 / NRRL Y-1140 / WM37) (Yeast).